The sequence spans 362 residues: Metacaspase-3 (362 aa).

Catalysis depends on residues His-174 and Cys-230.

It belongs to the peptidase C14B family.

This is Metacaspase-3 (AMC3) from Arabidopsis thaliana (Mouse-ear cress).